The primary structure comprises 154 residues: Ribonuclease H (154 aa).

The 142-residue stretch at 9–150 (SHPHIIIYTD…ADALANKGVE (142 aa)) folds into the RNase H type-1 domain. Residues D18, E56, D78, and D142 each contribute to the Mg(2+) site.

The protein belongs to the RNase H family. Monomer. The cofactor is Mg(2+).

The protein localises to the cytoplasm. The enzyme catalyses Endonucleolytic cleavage to 5'-phosphomonoester.. Its function is as follows. Endonuclease that specifically degrades the RNA of RNA-DNA hybrids. The chain is Ribonuclease H from Polynucleobacter asymbioticus (strain DSM 18221 / CIP 109841 / QLW-P1DMWA-1) (Polynucleobacter necessarius subsp. asymbioticus).